The chain runs to 297 residues: Tyrosine recombinase XerD (297 aa).

The 86-residue stretch at 1 to 86 (MKNLALIDLF…AMRKLFQYLY (86 aa)) folds into the Core-binding (CB) domain. The Tyr recombinase domain maps to 107–291 (RLPKYLTEQQ…AKERLKRLHE (185 aa)). Residues Arg-147, Lys-171, His-243, Arg-246, and His-269 contribute to the active site. Tyr-278 acts as the O-(3'-phospho-DNA)-tyrosine intermediate in catalysis.

Belongs to the 'phage' integrase family. XerD subfamily. In terms of assembly, forms a cyclic heterotetrameric complex composed of two molecules of XerC and two molecules of XerD.

The protein localises to the cytoplasm. In terms of biological role, site-specific tyrosine recombinase, which acts by catalyzing the cutting and rejoining of the recombining DNA molecules. The XerC-XerD complex is essential to convert dimers of the bacterial chromosome into monomers to permit their segregation at cell division. It also contributes to the segregational stability of plasmids. The chain is Tyrosine recombinase XerD from Haemophilus influenzae (strain ATCC 51907 / DSM 11121 / KW20 / Rd).